Consider the following 559-residue polypeptide: MGKKNKSKINPIEELKSDCLPILELQYSDPLFQIASHPEQAIIISGLATGYVYCHRYNVTVLENYLQQQKKKFVSDADGKKSKKVKFWTVYDIINENKDNADTGSDSGVELIWKTKRHKGSVRCIALDSDGQFVYTVGTDNVLKKADVLTGKVVKKTNLKNDNGGKYTKMVKSPTHSLLILGDENGTVIVLNSETLQETNRLTKVHNGDDAINDIFHFAKRSIYRYISLGQTTLAYWDARESNESDFKLDPEDTTSKRKVMLSDDQEDEVLCGTFVDPEVGDNLVCGMGDGILTVWKPERNDLEDQLNRIKIAKEESIDCIVPTLQDDNCIWCGCSNGNIYKADIKKGKVVEVRNHSSLDEVSFLDLDYDYRVISGGMDKVKIWQSRNEVSEEEDDEESESFSDSDSDSDSDSDSDSDSDRDRDRDSDSDGDSDGDDIGNGSDVNDSGASGSENDSSDVWEGLENGSDDEPVQEKDETSGSDMDDIDEGSDSSEGELIGLSREELIAELDEDIMEESEQEGEKLQKKRKNEPSKKNTKNLKKVKPSYNDSHGIRKFEGL.

WD repeat units follow at residues Gln26–Gln67, Ala77–Lys116, Arg117–Lys156, Asp162–Arg201, Asn207–Phe247, Asp265–Gln306, Ala313–Lys347, Arg354–Glu394, and Asp428–Glu470. Disordered regions lie at residues Ser386–Leu500 and Glu515–Leu559. Over residues Ser391–Ser417 the composition is skewed to acidic residues. A compositionally biased stretch (basic and acidic residues) spans Asp418 to Asp428. Acidic residues predominate over residues Asp482–Glu494. Positions Glu520–Lys534 are enriched in basic and acidic residues. Basic residues predominate over residues Lys535–Lys544.

This sequence belongs to the WD repeat WDR55 family.

The protein localises to the nucleus. It is found in the nucleolus. The chain is WD repeat-containing protein JIP5 (JIP5) from Vanderwaltozyma polyspora (strain ATCC 22028 / DSM 70294 / BCRC 21397 / CBS 2163 / NBRC 10782 / NRRL Y-8283 / UCD 57-17) (Kluyveromyces polysporus).